A 239-amino-acid polypeptide reads, in one-letter code: Probable GTP-binding protein EngB (239 aa).

In terms of domain architecture, EngB-type G spans 23–219 (QVPEIAFAGR…NDKILELLGL (197 aa)). GTP-binding positions include 31–38 (GRSNAGKS), 58–62 (GRTQH), 92–95 (DLPG), 159–162 (TKSD), and 193–200 (FTAQLFSA). Mg(2+) is bound by residues S38 and T60.

This sequence belongs to the TRAFAC class TrmE-Era-EngA-EngB-Septin-like GTPase superfamily. EngB GTPase family. Mg(2+) serves as cofactor.

Its function is as follows. Necessary for normal cell division and for the maintenance of normal septation. This is Probable GTP-binding protein EngB from Herminiimonas arsenicoxydans.